The primary structure comprises 1033 residues: Error-prone DNA polymerase (1033 aa).

This sequence belongs to the DNA polymerase type-C family. DnaE2 subfamily.

It is found in the cytoplasm. It carries out the reaction DNA(n) + a 2'-deoxyribonucleoside 5'-triphosphate = DNA(n+1) + diphosphate. Functionally, DNA polymerase involved in damage-induced mutagenesis and translesion synthesis (TLS). It is not the major replicative DNA polymerase. The protein is Error-prone DNA polymerase of Teredinibacter turnerae (strain ATCC 39867 / T7901).